Reading from the N-terminus, the 284-residue chain is Diaminopimelate epimerase (284 aa).

Positions 21, 54, and 74 each coordinate substrate. Residue Cys83 is the Proton donor of the active site. Substrate contacts are provided by residues 84-85 (GN), Asn167, Asn200, and 218-219 (ER). The active-site Proton acceptor is Cys227. 228 to 229 (GS) serves as a coordination point for substrate.

Belongs to the diaminopimelate epimerase family. In terms of assembly, homodimer.

It localises to the cytoplasm. The catalysed reaction is (2S,6S)-2,6-diaminopimelate = meso-2,6-diaminopimelate. The protein operates within amino-acid biosynthesis; L-lysine biosynthesis via DAP pathway; DL-2,6-diaminopimelate from LL-2,6-diaminopimelate: step 1/1. Functionally, catalyzes the stereoinversion of LL-2,6-diaminopimelate (L,L-DAP) to meso-diaminopimelate (meso-DAP), a precursor of L-lysine and an essential component of the bacterial peptidoglycan. The sequence is that of Diaminopimelate epimerase from Buchnera aphidicola subsp. Acyrthosiphon pisum (strain APS) (Acyrthosiphon pisum symbiotic bacterium).